A 286-amino-acid polypeptide reads, in one-letter code: Tryptophan 2,3-dioxygenase (286 aa).

Residues 53 to 57, Y115, and R119 each bind substrate; that span reads FIVQH. H242 is a heme binding site. T256 contributes to the substrate binding site.

This sequence belongs to the tryptophan 2,3-dioxygenase family. As to quaternary structure, homotetramer. The cofactor is heme.

The enzyme catalyses L-tryptophan + O2 = N-formyl-L-kynurenine. It participates in amino-acid degradation; L-tryptophan degradation via kynurenine pathway; L-kynurenine from L-tryptophan: step 1/2. Heme-dependent dioxygenase that catalyzes the oxidative cleavage of the L-tryptophan (L-Trp) pyrrole ring and converts L-tryptophan to N-formyl-L-kynurenine. Catalyzes the oxidative cleavage of the indole moiety. This is Tryptophan 2,3-dioxygenase from Kineococcus radiotolerans (strain ATCC BAA-149 / DSM 14245 / SRS30216).